The sequence spans 641 residues: UvrABC system protein C (641 aa).

A GIY-YIG domain is found at 16 to 95 (ESPGVYRFWD…IKQYEPRFNI (80 aa)). A UVR domain is found at 208–243 (TEYLRRLEKDMRAAAAAEDFERAARLRDDAAALRLA).

The protein belongs to the UvrC family. Interacts with UvrB in an incision complex.

The protein localises to the cytoplasm. Functionally, the UvrABC repair system catalyzes the recognition and processing of DNA lesions. UvrC both incises the 5' and 3' sides of the lesion. The N-terminal half is responsible for the 3' incision and the C-terminal half is responsible for the 5' incision. The sequence is that of UvrABC system protein C from Acidothermus cellulolyticus (strain ATCC 43068 / DSM 8971 / 11B).